Reading from the N-terminus, the 58-residue chain is ATP synthase subunit a (58 aa).

A run of 2 helical transmembrane segments spans residues 11 to 31 and 35 to 55; these read EIFY…LTGL and VAIL…NDAI.

This sequence belongs to the ATPase A chain family. As to quaternary structure, F-type ATPases have 2 components, CF(1) - the catalytic core - and CF(0) - the membrane proton channel. CF(1) has five subunits: alpha(3), beta(3), gamma(1), delta(1), epsilon(1). CF(0) has three main subunits: a, b and c.

The protein localises to the mitochondrion inner membrane. Functionally, mitochondrial membrane ATP synthase (F(1)F(0) ATP synthase or Complex V) produces ATP from ADP in the presence of a proton gradient across the membrane which is generated by electron transport complexes of the respiratory chain. F-type ATPases consist of two structural domains, F(1) - containing the extramembraneous catalytic core and F(0) - containing the membrane proton channel, linked together by a central stalk and a peripheral stalk. During catalysis, ATP synthesis in the catalytic domain of F(1) is coupled via a rotary mechanism of the central stalk subunits to proton translocation. Key component of the proton channel; it may play a direct role in the translocation of protons across the membrane. This is ATP synthase subunit a (ATP6) from Brassica tournefortii (Wild turnip).